Consider the following 193-residue polypeptide: Protein TEX261 (193 aa).

A run of 5 helical transmembrane segments spans residues 1–21 (MVGV…PPPA), 39–59 (SRII…LYVF), 67–87 (IGVG…FPFI), 94–114 (FILS…FFAE), and 122–142 (VLAY…VSLS).

This sequence belongs to the SVP26 family.

The protein resides in the membrane. The protein is Protein TEX261 (TEX261) of Bos taurus (Bovine).